The following is a 249-amino-acid chain: Basic leucine zipper 23 (249 aa).

The interval 66–90 (KVSTDDTSESSGKKRPLGNREAVRK) is disordered. The region spanning 74–121 (ESSGKKRPLGNREAVRKYREKKKAKAASLEDEVMRLKAVNNQLLKRLQ) is the bZIP domain. Residues 78–98 (KKRPLGNREAVRKYREKKKAK) are basic motif. Residues 102–116 (LEDEVMRLKAVNNQL) are leucine-zipper.

The protein resides in the nucleus. Functionally, transcription factor involved in the response to zinc ion deficiency. Binds to the consensus sequence 5'-[AG]TGTCGACA[CT]-3' also called zinc deficiency response element (ZDRE). The ZDRE sequence is conserved in the plant kingdom and present in the promoters of genes that constitute the primary response to zinc deficiency, comprising additional ZIP metal transporter genes. Required for zinc accumulation in roots. Mediates the expression of the zinc transporter ZIP12 during growth in zinc-deficient conditions. ZIP12 transporter is involved in zinc uptake in roots. The protein is Basic leucine zipper 23 of Arabidopsis thaliana (Mouse-ear cress).